The following is a 126-amino-acid chain: Holo-[acyl-carrier-protein] synthase (126 aa).

The Mg(2+) site is built by aspartate 9 and glutamate 58.

This sequence belongs to the P-Pant transferase superfamily. AcpS family. The cofactor is Mg(2+).

It is found in the cytoplasm. It catalyses the reaction apo-[ACP] + CoA = holo-[ACP] + adenosine 3',5'-bisphosphate + H(+). Transfers the 4'-phosphopantetheine moiety from coenzyme A to a Ser of acyl-carrier-protein. The polypeptide is Holo-[acyl-carrier-protein] synthase (Aliivibrio fischeri (strain MJ11) (Vibrio fischeri)).